The primary structure comprises 163 residues: Nucleotide-binding protein DET1318 (163 aa).

It belongs to the YajQ family.

Functionally, nucleotide-binding protein. This Dehalococcoides mccartyi (strain ATCC BAA-2266 / KCTC 15142 / 195) (Dehalococcoides ethenogenes (strain 195)) protein is Nucleotide-binding protein DET1318.